Consider the following 444-residue polypeptide: Pentatricopeptide repeat-containing protein At4g35850, mitochondrial (444 aa).

The N-terminal 25 residues, 1–25 (MKFLMQSISGRNRSLVRALVSRRYF), are a transit peptide targeting the mitochondrion. PPR repeat units lie at residues 40–74 (DLSE…GVQP), 75–109 (TADI…GIAP), 110–144 (DVNL…DVKP), 145–179 (NGQT…GVGL), 255–289 (NLTV…GKDT), and 290–325 (DTYC…KIPA).

Belongs to the PPR family. P subfamily.

It localises to the mitochondrion. This is Pentatricopeptide repeat-containing protein At4g35850, mitochondrial from Arabidopsis thaliana (Mouse-ear cress).